A 404-amino-acid polypeptide reads, in one-letter code: Flavohemoprotein (404 aa).

The 138-residue stretch at 1–138 folds into the Globin domain; the sequence is MLSEQTRSLV…LADTLIGIEN (138 aa). Heme b is bound at residue His-85. Active-site charge relay system residues include Tyr-95 and Glu-137. The segment at 149–404 is reductase; the sequence is GGWSGWRPFR…EVFGSHPGDD (256 aa). The region spanning 152–263 is the FAD-binding FR-type domain; the sequence is SGWRPFRVAK…SAPQGDFFLH (112 aa). Residues Tyr-190 and 206–209 each bind FAD; that span reads RQYS. 276–281 contributes to the NADP(+) binding site; the sequence is GVGQTP. Position 396 to 399 (396 to 399) interacts with FAD; the sequence is VFGS.

Belongs to the globin family. Two-domain flavohemoproteins subfamily. The protein in the C-terminal section; belongs to the flavoprotein pyridine nucleotide cytochrome reductase family. It depends on heme b as a cofactor. FAD serves as cofactor.

The enzyme catalyses 2 nitric oxide + NADPH + 2 O2 = 2 nitrate + NADP(+) + H(+). The catalysed reaction is 2 nitric oxide + NADH + 2 O2 = 2 nitrate + NAD(+) + H(+). Functionally, is involved in NO detoxification in an aerobic process, termed nitric oxide dioxygenase (NOD) reaction that utilizes O(2) and NAD(P)H to convert NO to nitrate, which protects the bacterium from various noxious nitrogen compounds. Therefore, plays a central role in the inducible response to nitrosative stress. The chain is Flavohemoprotein from Chromobacterium violaceum (strain ATCC 12472 / DSM 30191 / JCM 1249 / CCUG 213 / NBRC 12614 / NCIMB 9131 / NCTC 9757 / MK).